Reading from the N-terminus, the 331-residue chain is UPF0324 membrane protein SAS0317 (331 aa).

Helical transmembrane passes span 9-26, 31-48, 69-88, 93-115, 122-144, 154-176, 183-202, 217-234, 247-269, 273-295, and 308-330; these read FMIG…SFLA, ILDK…AILY, LLRF…DIIG, LLAI…NKLL, ALLL…APIF, SIGI…YAIF, YGAW…LAGG, LGRV…ILIM, ISIP…VTIP, LNIL…GLNV, and LMTI…HWLY.

Belongs to the UPF0324 family.

Its subcellular location is the cell membrane. This is UPF0324 membrane protein SAS0317 from Staphylococcus aureus (strain MSSA476).